Reading from the N-terminus, the 189-residue chain is RNA-binding protein (189 aa).

The segment at 55-69 (CICPSSNHLVDDCVC) adopts a C4-type zinc-finger fold. The disordered stretch occupies residues 114–189 (FLTSVNPGES…DANTRKSKRK (76 aa)). Residues 158–167 (SSSERKRKEY) show a composition bias toward basic and acidic residues. A compositionally biased stretch (low complexity) spans 168-180 (SSNSETDLSSDSD).

It belongs to the phytoreovirus RNA-binding protein family.

The protein localises to the host cytoplasm. Constituent of viral factories. Binds to ssRNA and dsRNA. The polypeptide is RNA-binding protein (Alopecurus aequalis (Barnyard grass)).